Here is a 192-residue protein sequence, read N- to C-terminus: Orotate phosphoribosyltransferase (192 aa).

5-phospho-alpha-D-ribose 1-diphosphate-binding positions include Arg101, Lys102, Lys105, His107, and 129-137 (EDVITTGGS). Orotate contacts are provided by Thr133 and Arg161.

This sequence belongs to the purine/pyrimidine phosphoribosyltransferase family. PyrE subfamily. Homodimer. Mg(2+) serves as cofactor.

The catalysed reaction is orotidine 5'-phosphate + diphosphate = orotate + 5-phospho-alpha-D-ribose 1-diphosphate. Its pathway is pyrimidine metabolism; UMP biosynthesis via de novo pathway; UMP from orotate: step 1/2. Catalyzes the transfer of a ribosyl phosphate group from 5-phosphoribose 1-diphosphate to orotate, leading to the formation of orotidine monophosphate (OMP). The polypeptide is Orotate phosphoribosyltransferase (Sorangium cellulosum (strain So ce56) (Polyangium cellulosum (strain So ce56))).